Here is a 137-residue protein sequence, read N- to C-terminus: Gonadotropin subunit beta-1 (137 aa).

An N-terminal signal peptide occupies residues M1–A24. 5 disulfides stabilise this stretch: C32–C78, C46–C93, C55–C108, C59–C110, and C113–C120. N36 is a glycosylation site (N-linked (GlcNAc...) asparagine).

It belongs to the glycoprotein hormones subunit beta family. In terms of assembly, heterodimer of an alpha and a beta chain.

The protein resides in the secreted. Involved in gametogenesis and steroidogenesis. This Oncorhynchus masou (Cherry salmon) protein is Gonadotropin subunit beta-1 (cgba).